Consider the following 28-residue polypeptide: FLAKKVAKTVAKQAAKQGAKYIANKQTE.

At E28 the chain carries Glutamic acid 1-amide.

As to expression, expressed by the venom gland.

Its subcellular location is the secreted. The chain is Short cationic peptide-1c from Cupiennius salei (American wandering spider).